A 156-amino-acid chain; its full sequence is MNINATLLGQAIAFAVFVWFCMKYVWPPLLAAIEDRQKKISDGLTQAERAGKDLELAQAKASEKLKEAKVQAAEIIEQANKRRNQIVEAAKTEAETERQKIIAQGEAEVEVDRNRVREELRLKVSALAIAGAEKIIKRSIDKEANSDIIDKLVAEL.

The chain crosses the membrane as a helical span at residues 11–31 (AIAFAVFVWFCMKYVWPPLLA).

It belongs to the ATPase B chain family. F-type ATPases have 2 components, F(1) - the catalytic core - and F(0) - the membrane proton channel. F(1) has five subunits: alpha(3), beta(3), gamma(1), delta(1), epsilon(1). F(0) has three main subunits: a(1), b(2) and c(10-14). The alpha and beta chains form an alternating ring which encloses part of the gamma chain. F(1) is attached to F(0) by a central stalk formed by the gamma and epsilon chains, while a peripheral stalk is formed by the delta and b chains.

The protein resides in the cell inner membrane. In terms of biological role, f(1)F(0) ATP synthase produces ATP from ADP in the presence of a proton or sodium gradient. F-type ATPases consist of two structural domains, F(1) containing the extramembraneous catalytic core and F(0) containing the membrane proton channel, linked together by a central stalk and a peripheral stalk. During catalysis, ATP synthesis in the catalytic domain of F(1) is coupled via a rotary mechanism of the central stalk subunits to proton translocation. Its function is as follows. Component of the F(0) channel, it forms part of the peripheral stalk, linking F(1) to F(0). In Psychromonas ingrahamii (strain DSM 17664 / CCUG 51855 / 37), this protein is ATP synthase subunit b.